A 71-amino-acid polypeptide reads, in one-letter code: Small ribosomal subunit protein bS21 (71 aa).

Residues 49 to 59 (KAAAVKRAAKK) are compositionally biased toward basic residues. The segment at 49-71 (KAAAVKRAAKKVSRENARRVRMY) is disordered. Basic and acidic residues predominate over residues 60–71 (VSRENARRVRMY).

The protein belongs to the bacterial ribosomal protein bS21 family.

In Colwellia psychrerythraea (strain 34H / ATCC BAA-681) (Vibrio psychroerythus), this protein is Small ribosomal subunit protein bS21.